The primary structure comprises 57 residues: Small ribosomal subunit protein bS21 (57 aa).

This sequence belongs to the bacterial ribosomal protein bS21 family.

In Geobacillus kaustophilus (strain HTA426), this protein is Small ribosomal subunit protein bS21.